Consider the following 404-residue polypeptide: Cysteine desulfurase IscS (404 aa).

Residues 75 to 76, Asn-155, Gln-183, and 203 to 205 contribute to the pyridoxal 5'-phosphate site; these read AT and SAH. At Lys-206 the chain carries N6-(pyridoxal phosphate)lysine. Residue Thr-243 coordinates pyridoxal 5'-phosphate. Cys-328 functions as the Cysteine persulfide intermediate in the catalytic mechanism. Cys-328 serves as a coordination point for [2Fe-2S] cluster.

This sequence belongs to the class-V pyridoxal-phosphate-dependent aminotransferase family. NifS/IscS subfamily. In terms of assembly, homodimer. Forms a heterotetramer with IscU, interacts with other sulfur acceptors. It depends on pyridoxal 5'-phosphate as a cofactor.

The protein localises to the cytoplasm. The catalysed reaction is (sulfur carrier)-H + L-cysteine = (sulfur carrier)-SH + L-alanine. It participates in cofactor biosynthesis; iron-sulfur cluster biosynthesis. In terms of biological role, master enzyme that delivers sulfur to a number of partners involved in Fe-S cluster assembly, tRNA modification or cofactor biosynthesis. Catalyzes the removal of elemental sulfur atoms from cysteine to produce alanine. Functions as a sulfur delivery protein for Fe-S cluster synthesis onto IscU, an Fe-S scaffold assembly protein, as well as other S acceptor proteins. In Azotobacter vinelandii (strain DJ / ATCC BAA-1303), this protein is Cysteine desulfurase IscS.